We begin with the raw amino-acid sequence, 483 residues long: Putative inorganic phosphate cotransporter (483 aa).

A run of 7 helical transmembrane segments spans residues 64-84 (YILS…GILA), 90-110 (LRFL…VPVA), 187-207 (IFYV…IFVY), 292-312 (LPYL…DWMI), 349-369 (ALTL…YSGF), 383-403 (FLMS…PIAA), and 420-440 (IVFF…NIFG). Residues 447–483 (WDNPSEDEQKPALESSSTTNPPRLSNGSSAPRAISSS) are disordered. Polar residues predominate over residues 460-483 (ESSSTTNPPRLSNGSSAPRAISSS).

The protein belongs to the major facilitator superfamily. Sodium/anion cotransporter family.

It is found in the membrane. In terms of biological role, may be an inorganic phosphate cotransporter. The polypeptide is Putative inorganic phosphate cotransporter (Picot) (Drosophila ananassae (Fruit fly)).